Here is a 99-residue protein sequence, read N- to C-terminus: Plastocyanin (99 aa).

Residues 1 to 99 form the Plastocyanin-like domain; it reads IEVLLGGGDG…AGMVGKVTVN (99 aa). The Cu cation site is built by His-37, Cys-84, His-87, and Met-92.

It belongs to the plastocyanin family. It depends on Cu(2+) as a cofactor.

The protein resides in the plastid. It localises to the chloroplast thylakoid membrane. Functionally, participates in electron transfer between P700 and the cytochrome b6-f complex in photosystem I. This chain is Plastocyanin (PETE), found in Capsella bursa-pastoris (Shepherd's purse).